The chain runs to 352 residues: C-X-C chemokine receptor type 4 (352 aa).

Residues 1–21 (MEGISIYTSDNYTEEMGSGDY) are important for chemokine binding and signaling. Over 1-38 (MEGISIYTSDNYTEEMGSGDYDSIKEPCFREENAHFNR) the chain is Extracellular. A Sulfotyrosine modification is found at Tyr-7. A glycan (N-linked (GlcNAc...) asparagine) is linked at Asn-11. Sulfotyrosine is present on Tyr-12. An O-linked (Xyl...) (chondroitin sulfate) serine glycan is attached at Ser-18. Residue Tyr-21 is modified to Sulfotyrosine. Cystine bridges form between Cys-28–Cys-274 and Cys-109–Cys-186. The helical transmembrane segment at 39–63 (IFLPTIYSIIFLTGIVGNGLVILVM) threads the bilayer. Residues 64 to 77 (GYQKKLRSMTDKYR) lie on the Cytoplasmic side of the membrane. Residues 78 to 99 (LHLSVADLLFVITLPFWAVDAV) traverse the membrane as a helical segment. Positions 94-97 (WAVD) are chemokine binding. Topologically, residues 100 to 110 (ANWYFGNFLCK) are extracellular. A helical transmembrane segment spans residues 111–130 (AVHVIYTVNLYSSVLILAFI). The interval 113-117 (HVIYT) is chemokine binding. Residues 131–154 (SLDRYLAIVHATNSQKPRKLLAEK) lie on the Cytoplasmic side of the membrane. An Important for signaling motif is present at residues 133–135 (DRY). An involved in dimerization; when bound to chemokine region spans residues 135-147 (YLAIVHATNSQKP). The helical transmembrane segment at 155–174 (VVYVGVWIPALLLTIPDFIF) threads the bilayer. The Extracellular portion of the chain corresponds to 175–195 (ASVSEADDRYICDRFYPNDLW). Residues 186-190 (CDRFY) form a chemokine binding, important for signaling region. An involved in dimerization region spans residues 191-210 (PNDLWVVVFQFQHIMVGLIL). The helical transmembrane segment at 196–216 (VVVFQFQHIMVGLILPGIDIL) threads the bilayer. At 217–241 (SCYCIIISKLSHSKGHQKRKALKTT) the chain is on the cytoplasmic side. Residues 242-261 (VILILAFFACWLPYYIGISI) form a helical membrane-spanning segment. Over 262–282 (DSFILLEIIKQGCEFENTVHK) the chain is Extracellular. Residues 266–268 (LLE) are involved in dimerization. The chain crosses the membrane as a helical span at residues 283-302 (WISITEALAFFHCCLNPILY). The Cytoplasmic segment spans residues 303–352 (AFLGAKFKTSAQHALTSVSRGSSLKILSKGKRGGHSSVSTESESSSFHSS). Phosphoserine is present on residues Ser-319 and Ser-321. Phosphoserine; by PKC and GRK6 is present on residues Ser-324 and Ser-325. The segment at 329–352 (LSKGKRGGHSSVSTESESSSFHSS) is disordered. Ser-330 carries the post-translational modification Phosphoserine; by GRK6. Lys-331 is covalently cross-linked (Glycyl lysine isopeptide (Lys-Gly) (interchain with G-Cter in ubiquitin)). Over residues 337 to 352 (HSSVSTESESSSFHSS) the composition is skewed to low complexity. Phosphoserine; by GRK6 is present on Ser-339. 2 positions are modified to phosphoserine: Ser-348 and Ser-351.

It belongs to the G-protein coupled receptor 1 family. Monomer. Can form homodimers. Interacts with CD164. Interacts with ARRB2; the interaction is dependent on the C-terminal phosphorylation of CXCR4 and allows activation of MAPK1 and MAPK3. Interacts with ARR3; the interaction is dependent on the C-terminal phosphorylation of CXCR4 and modulates calcium mobilization. Interacts with RNF113A; the interaction, enhanced by CXCL12, promotes CXCR4 ubiquitination and subsequent degradation. Interacts (via the cytoplasmic C-terminal) with ITCH (via the WW domains I and II); the interaction, enhanced by CXCL12, promotes CXCR4 ubiquitination and leads to its degradation. Interacts with extracellular ubiquitin. Interacts with DBN1; this interaction is enhanced by antigenic stimulation. Following LPS binding, may form a complex with GDF5, HSP90AA1 and HSPA8. In terms of processing, phosphorylated on agonist stimulation. Rapidly phosphorylated on serine and threonine residues in the C-terminal. Phosphorylation at Ser-324 and Ser-325 leads to recruitment of ITCH, ubiquitination and protein degradation. Ubiquitinated after ligand binding, leading to its degradation. Ubiquitinated by ITCH at the cell membrane on agonist stimulation. The ubiquitin-dependent mechanism, endosomal sorting complex required for transport (ESCRT), then targets CXCR4 for lysosomal degradation. This process is dependent also on prior Ser-/Thr-phosphorylation in the C-terminal of CXCR4. Also binding of ARRB1 to STAM negatively regulates CXCR4 sorting to lysosomes though modulating ubiquitination of SFR5S. Post-translationally, sulfation is required for efficient binding of CXCL12/SDF-1alpha and promotes its dimerization. In terms of processing, O- and N-glycosylated. N-glycosylation can mask coreceptor function. The O-glycosylation chondroitin sulfate attachment does not affect interaction with CXCL12/SDF-1alpha nor its coreceptor activity.

It localises to the cell membrane. The protein localises to the cell junction. It is found in the early endosome. The protein resides in the late endosome. Its subcellular location is the lysosome. Its function is as follows. Receptor for the C-X-C chemokine CXCL12/SDF-1 that transduces a signal by increasing intracellular calcium ion levels and enhancing MAPK1/MAPK3 activation. Involved in the AKT signaling cascade. Plays a role in regulation of cell migration, e.g. during wound healing. Acts as a receptor for extracellular ubiquitin; leading to enhanced intracellular calcium ions and reduced cellular cAMP levels. Binds bacterial lipopolysaccharide (LPS) et mediates LPS-induced inflammatory response, including TNF secretion by monocytes. Involved in hematopoiesis and in cardiac ventricular septum formation. Also plays an essential role in vascularization of the gastrointestinal tract, probably by regulating vascular branching and/or remodeling processes in endothelial cells. Involved in cerebellar development. In the CNS, could mediate hippocampal-neuron survival. The protein is C-X-C chemokine receptor type 4 (CXCR4) of Macaca mulatta (Rhesus macaque).